Consider the following 234-residue polypeptide: dTDP-4-amino-4,6-dideoxyglucose formyltransferase (234 aa).

DTDP-4-amino-4,6-dideoxy-alpha-D-glucose-binding positions include Asn9 and 62–64 (HCK). 65-67 (QRF) provides a ligand contact to (6R)-10-formyltetrahydrofolate. The Proton acceptor role is filled by His81. 90 to 94 (GWFPQ) is a dTDP-4-amino-4,6-dideoxy-alpha-D-glucose binding site. (6R)-10-formyltetrahydrofolate contacts are provided by Asp112, Asp116, and Lys175. DTDP-4-amino-4,6-dideoxy-alpha-D-glucose is bound at residue Asn209.

This sequence belongs to the dTDP-Qui4N formyltransferase family. In terms of assembly, homodimer.

The catalysed reaction is dTDP-4-amino-4,6-dideoxy-alpha-D-glucose + (6R)-10-formyltetrahydrofolate = dTDP-4-formamido-4,6-dideoxy-alpha-D-glucose + (6S)-5,6,7,8-tetrahydrofolate + H(+). Its function is as follows. Sugar N-formyltransferase that catalyzes the conversion of dTDP-4-amino-4,6-dideoxyglucose into dTDP-4-formamido-4,6-dideoxyglucose using N(10)-formyltetrahydrofolate as the carbon source. Plays a role in virulence. The polypeptide is dTDP-4-amino-4,6-dideoxyglucose formyltransferase (Mycobacterium bovis (strain ATCC BAA-935 / AF2122/97)).